Consider the following 100-residue polypeptide: MPFLVALSGIISGVRDHSMTVRLDQQTRQRLQDIVKGGYRSANAAIVDAINKRWEALHDEQLDAAYAAAIHDNPAYPYESEAERSAARARRNARQQRSAQ.

The segment at 77 to 100 is disordered; sequence PYESEAERSAARARRNARQQRSAQ.

As to quaternary structure, forms a complex with cognate toxin MazF1.

In terms of biological role, probable antitoxin component of a type II toxin-antitoxin (TA) system. Labile antitoxin that binds to cognate MazF1 toxin and counteracts its endoribonuclease activity. The protein is Probable antitoxin MazE1 (mazE1) of Mycobacterium bovis (strain ATCC BAA-935 / AF2122/97).